Reading from the N-terminus, the 248-residue chain is Thioredoxin-like protein AAED1, chloroplastic (248 aa).

A chloroplast-targeting transit peptide spans 1-52; the sequence is MAIALSSSSTITSITLQPKLKTIHGLGTVLPGYSVKSHFRSVSLRRSAVVVS. N-acetylalanine is present on A53.

This sequence belongs to the peroxiredoxin-like PRXL2 family. PRXL2C subfamily.

Its subcellular location is the plastid. The protein resides in the chloroplast. The protein is Thioredoxin-like protein AAED1, chloroplastic of Arabidopsis thaliana (Mouse-ear cress).